A 265-amino-acid polypeptide reads, in one-letter code: 5'-nucleotidase SurE (265 aa).

Positions 11, 12, 43, and 101 each coordinate a divalent metal cation.

It belongs to the SurE nucleotidase family. A divalent metal cation is required as a cofactor.

The protein resides in the cytoplasm. The enzyme catalyses a ribonucleoside 5'-phosphate + H2O = a ribonucleoside + phosphate. Nucleotidase that shows phosphatase activity on nucleoside 5'-monophosphates. This Synechococcus sp. (strain CC9311) protein is 5'-nucleotidase SurE.